A 317-amino-acid polypeptide reads, in one-letter code: MKIKLANPRGFCAGVDRAIEIVNRALDVFGAPIYVRHEVVHNRFVVEGLRTRGAVFVDELDEVPDGALVIFSAHGVSQEVRQEADARGLKVFDATCPLVTKVHMEVMRYSRDGRECILIGHAGHPEVEGTMGQYDSANGGAIYLVEDEEDVGRLIVNDPGNLAYVTQTTLSVDDTARVIDALRQTFPEIKGPRKDDICYATQNRQDAVKELAATCDVVLVVGSVNSSNSNRLRELAERMQTPAYLIDGAHEIQPDWFAGAASVGVTAGASAPEVLVQQVVQRLRELGGEAPAEIAGREENIVFSMPKELRIPAVNQS.

Residue C12 coordinates [4Fe-4S] cluster. (2E)-4-hydroxy-3-methylbut-2-enyl diphosphate-binding residues include H41 and H74. Residues H41 and H74 each coordinate dimethylallyl diphosphate. Isopentenyl diphosphate contacts are provided by H41 and H74. C96 contributes to the [4Fe-4S] cluster binding site. H124 provides a ligand contact to (2E)-4-hydroxy-3-methylbut-2-enyl diphosphate. H124 contributes to the dimethylallyl diphosphate binding site. H124 is a binding site for isopentenyl diphosphate. E126 serves as the catalytic Proton donor. T168 is a binding site for (2E)-4-hydroxy-3-methylbut-2-enyl diphosphate. [4Fe-4S] cluster is bound at residue C198. The (2E)-4-hydroxy-3-methylbut-2-enyl diphosphate site is built by S226, S227, N228, and S270. Positions 226, 227, 228, and 270 each coordinate dimethylallyl diphosphate. S226, S227, N228, and S270 together coordinate isopentenyl diphosphate.

This sequence belongs to the IspH family. Requires [4Fe-4S] cluster as cofactor.

The catalysed reaction is isopentenyl diphosphate + 2 oxidized [2Fe-2S]-[ferredoxin] + H2O = (2E)-4-hydroxy-3-methylbut-2-enyl diphosphate + 2 reduced [2Fe-2S]-[ferredoxin] + 2 H(+). It carries out the reaction dimethylallyl diphosphate + 2 oxidized [2Fe-2S]-[ferredoxin] + H2O = (2E)-4-hydroxy-3-methylbut-2-enyl diphosphate + 2 reduced [2Fe-2S]-[ferredoxin] + 2 H(+). Its pathway is isoprenoid biosynthesis; dimethylallyl diphosphate biosynthesis; dimethylallyl diphosphate from (2E)-4-hydroxy-3-methylbutenyl diphosphate: step 1/1. It functions in the pathway isoprenoid biosynthesis; isopentenyl diphosphate biosynthesis via DXP pathway; isopentenyl diphosphate from 1-deoxy-D-xylulose 5-phosphate: step 6/6. Its function is as follows. Catalyzes the conversion of 1-hydroxy-2-methyl-2-(E)-butenyl 4-diphosphate (HMBPP) into a mixture of isopentenyl diphosphate (IPP) and dimethylallyl diphosphate (DMAPP). Acts in the terminal step of the DOXP/MEP pathway for isoprenoid precursor biosynthesis. The chain is 4-hydroxy-3-methylbut-2-enyl diphosphate reductase from Hahella chejuensis (strain KCTC 2396).